A 51-amino-acid polypeptide reads, in one-letter code: Sperm protamine P1 (51 aa).

This sequence belongs to the protamine P1 family. In terms of tissue distribution, testis.

It localises to the nucleus. The protein resides in the chromosome. Protamines substitute for histones in the chromatin of sperm during the haploid phase of spermatogenesis. They compact sperm DNA into a highly condensed, stable and inactive complex. This chain is Sperm protamine P1 (PRM1), found in Macaca mulatta (Rhesus macaque).